Reading from the N-terminus, the 265-residue chain is Imidazole glycerol phosphate synthase subunit HisF (265 aa).

Residues aspartate 17 and aspartate 136 contribute to the active site.

The protein belongs to the HisA/HisF family. Heterodimer of HisH and HisF.

The protein localises to the cytoplasm. It catalyses the reaction 5-[(5-phospho-1-deoxy-D-ribulos-1-ylimino)methylamino]-1-(5-phospho-beta-D-ribosyl)imidazole-4-carboxamide + L-glutamine = D-erythro-1-(imidazol-4-yl)glycerol 3-phosphate + 5-amino-1-(5-phospho-beta-D-ribosyl)imidazole-4-carboxamide + L-glutamate + H(+). The protein operates within amino-acid biosynthesis; L-histidine biosynthesis; L-histidine from 5-phospho-alpha-D-ribose 1-diphosphate: step 5/9. IGPS catalyzes the conversion of PRFAR and glutamine to IGP, AICAR and glutamate. The HisF subunit catalyzes the cyclization activity that produces IGP and AICAR from PRFAR using the ammonia provided by the HisH subunit. This is Imidazole glycerol phosphate synthase subunit HisF from Mycobacterium avium (strain 104).